The primary structure comprises 463 residues: Homoserine O-acetyltransferase FUB5 (463 aa).

Residues 113 to 436 form the AB hydrolase-1 domain; it reads NVMIICHALS…VSDDGHDAFL (324 aa). The active-site Nucleophile is the serine 211. The segment covering 296–312 has biased composition (basic and acidic residues); it reads RFGRDTGSKKKTQKQES. The segment at 296–331 is disordered; that stretch reads RFGRDTGSKKKTQKQESKTLPSNSTPIHSHSGADET. Catalysis depends on residues aspartate 403 and histidine 432.

The protein belongs to the AB hydrolase superfamily. MetX family.

It catalyses the reaction L-homoserine + acetyl-CoA = O-acetyl-L-homoserine + CoA. It participates in mycotoxin biosynthesis. In terms of biological role, homoserine O-acetyltransferase; part of the gene cluster that mediates the biosynthesis of fusaric acid, a mycotoxin with low to moderate toxicity to animals and humans, but with high phytotoxic properties. L-aspartate is suggested as fusaric acid amino acid precursor that is activated and further processed to O-acetyl-L-homoserine by cluster enzymes aspartate kinase FUB3 and homoserine O-acetyltransferase FUB5, as well as enzymes of the primary metabolism. The polyketide synthase (PKS) FUB1 generates the triketide trans-2-hexenal which is presumptively released by the hydrolase FUB4 and linked to the NRPS-bound amino acid precursor by NAD(P)-dependent dehydrogenase FUB6. FUB1, FUB4, and the non-canonical NRPS Fub8 may form an enzyme complex. Further processing of the NRPS-bound intermediate might be carried out by FUB6 and the sulfhydrylase FUB7, enabling a spontaneous electrocyclization to close the carbon backbone of fusaric acid. Dihydrofusaric acid is likely to be released via reduction by the thioester reductase (TR) domain of FUB8 whereupon the final oxidation to fusaric acid may (also) be performed by the FMN-dependent dehydrogenase FUB9. The polypeptide is Homoserine O-acetyltransferase FUB5 (Gibberella moniliformis (strain M3125 / FGSC 7600) (Maize ear and stalk rot fungus)).